Consider the following 472-residue polypeptide: MSSQLGHESSVSSPLSYKTDSNAFTREYAESLDAQDPLRDFRKEFIIPSKVDLKRKTLAIDDSSKDESDPRCIYLCGNSLGVQPRNARKYIDYYLRTWAIKGVTGHFLPHEDQLLPPFVDVDDAGAKLMAPIVGALESEVAVMGTLTANLHFLMASFYRPTQERYKIILEGKAFPSDHYAIESQIRHHNLRPEDAMVLIEPEDRLKPILRTEQILRVIDEHASSTALVLLSGIQFYTGQYFDIEKITAHAQSKGILVGWDCAHAAGNVDLRLHDWNVDFAAWCNYKYLNSGPGGMAALFVHERHGRVDMDKVGSDEEPFRPRLSGWWGGDKKTRFLMNNNFLPQTGAAGFQLSNPSVLDMNAVVASLELFNRTSMAEIRQKSLNATGYLEHLLLNYPADFSTGKRPFSIITPSNPAERGAQLSLLLEPGLLDSVLETLEEHGVVVDERKPDVIRVAPAPLYNTYTEYPTYRT.

Pyridoxal 5'-phosphate-binding positions include leucine 146, threonine 147, 174-177 (FPSD), serine 231, aspartate 260, histidine 263, and tyrosine 285. Position 286 is an N6-(pyridoxal phosphate)lysine (lysine 286). Pyridoxal 5'-phosphate is bound by residues tryptophan 326 and asparagine 354.

This sequence belongs to the kynureninase family. In terms of assembly, homodimer. It depends on pyridoxal 5'-phosphate as a cofactor.

It localises to the cytoplasm. The catalysed reaction is L-kynurenine + H2O = anthranilate + L-alanine + H(+). The enzyme catalyses 3-hydroxy-L-kynurenine + H2O = 3-hydroxyanthranilate + L-alanine + H(+). The protein operates within amino-acid degradation; L-kynurenine degradation; L-alanine and anthranilate from L-kynurenine: step 1/1. It participates in cofactor biosynthesis; NAD(+) biosynthesis; quinolinate from L-kynurenine: step 2/3. In terms of biological role, catalyzes the cleavage of L-kynurenine (L-Kyn) and L-3-hydroxykynurenine (L-3OHKyn) into anthranilic acid (AA) and 3-hydroxyanthranilic acid (3-OHAA), respectively. The protein is Kynureninase 1 (bna5-1) of Aspergillus niger (strain ATCC MYA-4892 / CBS 513.88 / FGSC A1513).